Consider the following 445-residue polypeptide: Argininosuccinate synthase (445 aa).

Residues 17–25 and A43 each bind ATP; that span reads AFSGGLDTS. Y99 is a binding site for L-citrulline. G129 and T131 together coordinate ATP. Residues T131, N135, and D136 each contribute to the L-aspartate site. L-citrulline is bound at residue N135. D136 is an ATP binding site. R139 and S192 together coordinate L-citrulline. ATP is bound at residue D194. 3 residues coordinate L-citrulline: T201, E203, and E280.

It belongs to the argininosuccinate synthase family. Type 2 subfamily. Homotetramer.

It is found in the cytoplasm. The enzyme catalyses L-citrulline + L-aspartate + ATP = 2-(N(omega)-L-arginino)succinate + AMP + diphosphate + H(+). The protein operates within amino-acid biosynthesis; L-arginine biosynthesis; L-arginine from L-ornithine and carbamoyl phosphate: step 2/3. This is Argininosuccinate synthase from Polaromonas naphthalenivorans (strain CJ2).